A 336-amino-acid polypeptide reads, in one-letter code: Small ribosomal subunit protein uS9m (336 aa).

Residues 32 to 81 (STTTTTTTTTTTTTSDEIPTTKPRFQSRFRRNQQPHQQQRSPYTSSQVTE) form a disordered region. The span at 33 to 45 (TTTTTTTTTTTTT) shows a compositional bias: low complexity. Residues 65–81 (QPHQQQRSPYTSSQVTE) show a composition bias toward polar residues.

Belongs to the universal ribosomal protein uS9 family. In terms of assembly, component of the mitochondrial small ribosomal subunit (mt-SSU).

The protein localises to the mitochondrion. Functionally, component of the mitochondrial ribosome (mitoribosome), a dedicated translation machinery responsible for the synthesis of mitochondrial genome-encoded proteins, including at least some of the essential transmembrane subunits of the mitochondrial respiratory chain. The mitoribosomes are attached to the mitochondrial inner membrane and translation products are cotranslationally integrated into the membrane. This chain is Small ribosomal subunit protein uS9m (MRPS9), found in Candida albicans (strain SC5314 / ATCC MYA-2876) (Yeast).